The primary structure comprises 322 residues: Transcription factor WRKY45-2 (322 aa).

Residues 67 to 110 form a disordered region; the sequence is GGEGSEVQSEVTCGGGASAGGKRKAPAANRKANCRRRTQQSSGN. Positions 112-180 form a DNA-binding region, WRKY; it reads VVVKNLDDGQ…YIGEHTCRDP (69 aa). Residues 256–284 are disordered; sequence SDQEEVLSSLTPGSSAARGGGVAGPFGPD.

This sequence belongs to the WRKY group III family. In terms of tissue distribution, expressed in aleurone cells.

It is found in the nucleus. In terms of biological role, transcriptional activator involved in defense responses against pathogens. Acts as a positive regulator of defense responses against the rice blast fungus Magnaporthe oryzae. Acts as a positive regulator of defense responses against the bacterial blight Xanthomonas oryzae pv oryzae (Xoo) and the bacterial streak Xanthomonas oryzae pv oryzicola (Xoc). Acts as a positive regulator of abscisic acid (ABA) signaling that suppresses growth of seedlings. Acts as a negative regulator of salt stress response. Acts as a negative regulator of cold stress response. Acts as a negative regulator of drought stress response. This is Transcription factor WRKY45-2 from Oryza sativa subsp. indica (Rice).